A 38-amino-acid polypeptide reads, in one-letter code: MKVLASVKCICRNCKIIKRKRVVRVICSSDARHKQRQG.

This sequence belongs to the bacterial ribosomal protein bL36 family.

This Polynucleobacter necessarius subsp. necessarius (strain STIR1) protein is Large ribosomal subunit protein bL36.